The chain runs to 524 residues: RNA-splicing ligase RtcB homolog 1 (524 aa).

D141, C144, H249, H281, and H372 together coordinate Mn(2+). 248–252 is a GMP binding site; the sequence is NHYLE. Residues 372-373, 421-424, S428, 447-450, and K523 contribute to the GMP site; these read HN, GGSM, and HGAG. The GMP-histidine intermediate role is filled by H447.

This sequence belongs to the RtcB family. Catalytic component of the tRNA-splicing ligase complex. Mn(2+) is required as a cofactor.

It catalyses the reaction a 3'-end 3'-phospho-ribonucleotide-RNA + a 5'-end dephospho-ribonucleoside-RNA + GTP = a ribonucleotidyl-ribonucleotide-RNA + GMP + diphosphate. The enzyme catalyses a 3'-end 2',3'-cyclophospho-ribonucleotide-RNA + a 5'-end dephospho-ribonucleoside-RNA + GTP + H2O = a ribonucleotidyl-ribonucleotide-RNA + GMP + diphosphate + H(+). Functionally, catalytic subunit of the tRNA-splicing ligase complex that acts by directly joining spliced tRNA halves to mature-sized tRNAs by incorporating the precursor-derived splice junction phosphate into the mature tRNA as a canonical 3',5'-phosphodiester. May act as an RNA ligase with broad substrate specificity, and may function toward other RNAs. The polypeptide is RNA-splicing ligase RtcB homolog 1 (Entamoeba histolytica (strain ATCC 30459 / HM-1:IMSS / ABRM)).